Consider the following 479-residue polypeptide: Ribulose bisphosphate carboxylase large chain 2 (479 aa).

Substrate contacts are provided by N116 and T166. Residue K168 is the Proton acceptor of the active site. K170 serves as a coordination point for substrate. Residues K194, D196, and E197 each contribute to the Mg(2+) site. K194 bears the N6-carboxylysine mark. Catalysis depends on H287, which acts as the Proton acceptor. 3 residues coordinate substrate: R288, H320, and S372.

Belongs to the RuBisCO large chain family. Type I subfamily. In terms of assembly, heterohexadecamer of 8 large chains and 8 small chains. Mg(2+) is required as a cofactor.

It catalyses the reaction 2 (2R)-3-phosphoglycerate + 2 H(+) = D-ribulose 1,5-bisphosphate + CO2 + H2O. The enzyme catalyses D-ribulose 1,5-bisphosphate + O2 = 2-phosphoglycolate + (2R)-3-phosphoglycerate + 2 H(+). Its function is as follows. RuBisCO catalyzes two reactions: the carboxylation of D-ribulose 1,5-bisphosphate, the primary event in carbon dioxide fixation, as well as the oxidative fragmentation of the pentose substrate. Both reactions occur simultaneously and in competition at the same active site. The polypeptide is Ribulose bisphosphate carboxylase large chain 2 (Bradyrhizobium sp. (strain BTAi1 / ATCC BAA-1182)).